Here is a 439-residue protein sequence, read N- to C-terminus: Enolase 1 (439 aa).

Substrate contacts are provided by histidine 160 and glutamate 169. The active-site Proton donor is the glutamate 212. Aspartate 247, glutamate 296, and aspartate 323 together coordinate Mg(2+). Residues glutamate 296 and aspartate 323 each contribute to the substrate site. The active-site Proton acceptor is lysine 348. Residues 375 to 378 and lysine 399 contribute to the substrate site; that span reads SHRS.

It belongs to the enolase family. In terms of assembly, homodimer. Requires Mg(2+) as cofactor.

The protein resides in the cytoplasm. The catalysed reaction is (2R)-2-phosphoglycerate = phosphoenolpyruvate + H2O. It participates in carbohydrate degradation; glycolysis; pyruvate from D-glyceraldehyde 3-phosphate: step 4/5. This Debaryomyces hansenii (strain ATCC 36239 / CBS 767 / BCRC 21394 / JCM 1990 / NBRC 0083 / IGC 2968) (Yeast) protein is Enolase 1 (ENO1).